Reading from the N-terminus, the 548-residue chain is MLIIIQSLLLATTASLCIADTPVPTQIRLVHDLLDNYDKKAKPMWDNSKPINVSFSMDLYQILELNEPQQYILLNAWIIERWFDEFLYWNPDDYENITELRLPYDSIWLPDTTLYNSLVMKDDDTRRLLNSKLTTDTHRRAALIELLYPTIYKFSCLLDLRFFPFDVQVCTMTFSSWTYDQKGIDYFPYSDKIGTSNYLENEGWYILQTKIKRQEVKYACCPNNYTLLQLTLYLRRKPLFYLVNLIIPTSIITLIAIVGFFTTSSASGMREEKVSLGITTLLSMSILMLMVSDQMPTTSTFIPLIGWFILAMIIVISLGTVVSSVIIAIQKRGSLGERMSKRALKFAKVLAWFTCTSLPPHVEKEHMMEAFDAPTPLVEVRPLQLASVKESVRNKWVSGARRATQRGNSGLALISDKSTDPLIHLSPTAHQPDESISPSAPPVPSSSPLPPPLTPGPADDVVSVASELSSKFLTSRMRPKSQKDNTFAAMQSSIKANRQLAVAEFEWFATVVERTCFVIFVVAFLIITFGINFIGFIHWHQAGVEYGG.

The signal sequence occupies residues Met1–Ala19. Residues Thr21–Leu239 are Extracellular-facing. 3 N-linked (GlcNAc...) asparagine glycosylation sites follow: Asn52, Asn96, and Asn224. Transmembrane regions (helical) follow at residues Phe240 to Phe260, Val274 to Gln294, and Phe301 to Val321. Residues Leu422–Asp460 form a disordered region. A compositionally biased stretch (pro residues) spans Ser439 to Pro455. The chain crosses the membrane as a helical span at residues Phe517–Ile537. Over His538–Gly548 the chain is Cytoplasmic.

Belongs to the ligand-gated ion channel (TC 1.A.9) family. Acetylcholine receptor (TC 1.A.9.1) subfamily. As to quaternary structure, the functional receptor is a heteromer of deg-3 and des-2. Interacts with ric-3; which is required for proper receptor folding.

Its subcellular location is the cell membrane. In terms of biological role, subunit of the non-synaptic neuronal acetylcholine receptor (AChR), which may play a role in chemotaxis towards choline. After binding choline or acetylcholine, the AChR responds by an extensive change in conformation that affects all subunits and leads to opening of an ion-conducting channel across the plasma membrane. This chain is Acetylcholine receptor subunit alpha-type des-2 (des-2), found in Caenorhabditis elegans.